A 385-amino-acid chain; its full sequence is 8-amino-7-oxononanoate synthase (385 aa).

Arginine 21 serves as a coordination point for substrate. 108 to 109 (GF) contributes to the pyridoxal 5'-phosphate binding site. A substrate-binding site is contributed by histidine 133. Pyridoxal 5'-phosphate-binding residues include serine 179, histidine 207, and threonine 233. Lysine 236 is modified (N6-(pyridoxal phosphate)lysine). Threonine 352 contributes to the substrate binding site.

Belongs to the class-II pyridoxal-phosphate-dependent aminotransferase family. BioF subfamily. In terms of assembly, homodimer. Pyridoxal 5'-phosphate serves as cofactor.

It carries out the reaction 6-carboxyhexanoyl-[ACP] + L-alanine + H(+) = (8S)-8-amino-7-oxononanoate + holo-[ACP] + CO2. The protein operates within cofactor biosynthesis; biotin biosynthesis. Catalyzes the decarboxylative condensation of pimeloyl-[acyl-carrier protein] and L-alanine to produce 8-amino-7-oxononanoate (AON), [acyl-carrier protein], and carbon dioxide. The protein is 8-amino-7-oxononanoate synthase of Pseudescherichia vulneris (Escherichia vulneris).